The primary structure comprises 45 residues: Photosystem II reaction center protein K (45 aa).

A propeptide spanning residues 1–8 (MEAALLLA) is cleaved from the precursor. The chain crosses the membrane as a helical span at residues 24–44 (LPVIPVFFLLLAFVWQAAVGF).

It belongs to the PsbK family. As to quaternary structure, PSII is composed of 1 copy each of membrane proteins PsbA, PsbB, PsbC, PsbD, PsbE, PsbF, PsbH, PsbI, PsbJ, PsbK, PsbL, PsbM, PsbT, PsbX, PsbY, PsbZ, Psb30/Ycf12, peripheral proteins PsbO, CyanoQ (PsbQ), PsbU, PsbV and a large number of cofactors. It forms dimeric complexes.

It localises to the cellular thylakoid membrane. One of the components of the core complex of photosystem II (PSII). PSII is a light-driven water:plastoquinone oxidoreductase that uses light energy to abstract electrons from H(2)O, generating O(2) and a proton gradient subsequently used for ATP formation. It consists of a core antenna complex that captures photons, and an electron transfer chain that converts photonic excitation into a charge separation. In Synechococcus elongatus (strain ATCC 33912 / PCC 7942 / FACHB-805) (Anacystis nidulans R2), this protein is Photosystem II reaction center protein K.